The following is a 241-amino-acid chain: Probable 2-phosphosulfolactate phosphatase (241 aa).

Belongs to the ComB family. The cofactor is Mg(2+).

The enzyme catalyses (2R)-O-phospho-3-sulfolactate + H2O = (2R)-3-sulfolactate + phosphate. The polypeptide is Probable 2-phosphosulfolactate phosphatase (Caldanaerobacter subterraneus subsp. tengcongensis (strain DSM 15242 / JCM 11007 / NBRC 100824 / MB4) (Thermoanaerobacter tengcongensis)).